Reading from the N-terminus, the 301-residue chain is Protein FdhE homolog (301 aa).

The protein belongs to the FdhE family.

It is found in the cytoplasm. In terms of biological role, necessary for formate dehydrogenase activity. The protein is Protein FdhE homolog of Erwinia tasmaniensis (strain DSM 17950 / CFBP 7177 / CIP 109463 / NCPPB 4357 / Et1/99).